The primary structure comprises 482 residues: Glycogen synthase 2 (482 aa).

ADP-alpha-D-glucose is bound at residue Lys18.

This sequence belongs to the glycosyltransferase 1 family. Bacterial/plant glycogen synthase subfamily.

The enzyme catalyses [(1-&gt;4)-alpha-D-glucosyl](n) + ADP-alpha-D-glucose = [(1-&gt;4)-alpha-D-glucosyl](n+1) + ADP + H(+). The protein operates within glycan biosynthesis; glycogen biosynthesis. Its function is as follows. Synthesizes alpha-1,4-glucan chains using ADP-glucose. The chain is Glycogen synthase 2 from Bradyrhizobium diazoefficiens (strain JCM 10833 / BCRC 13528 / IAM 13628 / NBRC 14792 / USDA 110).